The chain runs to 451 residues: Probable glycine dehydrogenase (decarboxylating) subunit 1 (451 aa).

Belongs to the GcvP family. N-terminal subunit subfamily. As to quaternary structure, the glycine cleavage system is composed of four proteins: P, T, L and H. In this organism, the P 'protein' is a heterodimer of two subunits.

It carries out the reaction N(6)-[(R)-lipoyl]-L-lysyl-[glycine-cleavage complex H protein] + glycine + H(+) = N(6)-[(R)-S(8)-aminomethyldihydrolipoyl]-L-lysyl-[glycine-cleavage complex H protein] + CO2. Its function is as follows. The glycine cleavage system catalyzes the degradation of glycine. The P protein binds the alpha-amino group of glycine through its pyridoxal phosphate cofactor; CO(2) is released and the remaining methylamine moiety is then transferred to the lipoamide cofactor of the H protein. The polypeptide is Probable glycine dehydrogenase (decarboxylating) subunit 1 (Staphylococcus aureus (strain MSSA476)).